The primary structure comprises 334 residues: Holliday junction branch migration complex subunit RuvB (334 aa).

The large ATPase domain (RuvB-L) stretch occupies residues 1–182 (MDKRMVDQEF…FGVHLRLEYY (182 aa)). ATP contacts are provided by residues L21, R22, G63, K66, T67, T68, 129-131 (EDF), R172, Y182, and R219. T67 serves as a coordination point for Mg(2+). Residues 183-253 (NENDLKEIIT…TTKRALQLLQ (71 aa)) form a small ATPAse domain (RuvB-S) region. The head domain (RuvB-H) stretch occupies residues 256–334 (QHGLDYIDHK…HFNTTNEKRE (79 aa)). DNA is bound by residues R292, R311, and R316.

This sequence belongs to the RuvB family. In terms of assembly, homohexamer. Forms an RuvA(8)-RuvB(12)-Holliday junction (HJ) complex. HJ DNA is sandwiched between 2 RuvA tetramers; dsDNA enters through RuvA and exits via RuvB. An RuvB hexamer assembles on each DNA strand where it exits the tetramer. Each RuvB hexamer is contacted by two RuvA subunits (via domain III) on 2 adjacent RuvB subunits; this complex drives branch migration. In the full resolvosome a probable DNA-RuvA(4)-RuvB(12)-RuvC(2) complex forms which resolves the HJ.

Its subcellular location is the cytoplasm. The enzyme catalyses ATP + H2O = ADP + phosphate + H(+). The RuvA-RuvB-RuvC complex processes Holliday junction (HJ) DNA during genetic recombination and DNA repair, while the RuvA-RuvB complex plays an important role in the rescue of blocked DNA replication forks via replication fork reversal (RFR). RuvA specifically binds to HJ cruciform DNA, conferring on it an open structure. The RuvB hexamer acts as an ATP-dependent pump, pulling dsDNA into and through the RuvAB complex. RuvB forms 2 homohexamers on either side of HJ DNA bound by 1 or 2 RuvA tetramers; 4 subunits per hexamer contact DNA at a time. Coordinated motions by a converter formed by DNA-disengaged RuvB subunits stimulates ATP hydrolysis and nucleotide exchange. Immobilization of the converter enables RuvB to convert the ATP-contained energy into a lever motion, pulling 2 nucleotides of DNA out of the RuvA tetramer per ATP hydrolyzed, thus driving DNA branch migration. The RuvB motors rotate together with the DNA substrate, which together with the progressing nucleotide cycle form the mechanistic basis for DNA recombination by continuous HJ branch migration. Branch migration allows RuvC to scan DNA until it finds its consensus sequence, where it cleaves and resolves cruciform DNA. The chain is Holliday junction branch migration complex subunit RuvB from Staphylococcus epidermidis (strain ATCC 35984 / DSM 28319 / BCRC 17069 / CCUG 31568 / BM 3577 / RP62A).